The sequence spans 99 residues: Malonate decarboxylase acyl carrier protein (99 aa).

S25 is modified (O-(phosphoribosyl dephospho-coenzyme A)serine).

The protein belongs to the MdcC family. Covalently binds the prosthetic group of malonate decarboxylase.

The protein localises to the cytoplasm. Subunit of malonate decarboxylase, it is an acyl carrier protein to which acetyl and malonyl thioester residues are bound via a 2'-(5''-phosphoribosyl)-3'-dephospho-CoA prosthetic group and turn over during the catalytic mechanism. The polypeptide is Malonate decarboxylase acyl carrier protein (Pseudomonas savastanoi pv. phaseolicola (strain 1448A / Race 6) (Pseudomonas syringae pv. phaseolicola (strain 1448A / Race 6))).